The chain runs to 611 residues: Dihydroxy-acid dehydratase (611 aa).

Asp81 is a binding site for Mg(2+). Cys122 is a [2Fe-2S] cluster binding site. Residues Asp123 and Lys124 each coordinate Mg(2+). The residue at position 124 (Lys124) is an N6-carboxylysine. Residue Cys195 participates in [2Fe-2S] cluster binding. Glu491 lines the Mg(2+) pocket. The active-site Proton acceptor is the Ser517.

This sequence belongs to the IlvD/Edd family. As to quaternary structure, homodimer. [2Fe-2S] cluster serves as cofactor. The cofactor is Mg(2+).

It catalyses the reaction (2R)-2,3-dihydroxy-3-methylbutanoate = 3-methyl-2-oxobutanoate + H2O. The catalysed reaction is (2R,3R)-2,3-dihydroxy-3-methylpentanoate = (S)-3-methyl-2-oxopentanoate + H2O. Its pathway is amino-acid biosynthesis; L-isoleucine biosynthesis; L-isoleucine from 2-oxobutanoate: step 3/4. It participates in amino-acid biosynthesis; L-valine biosynthesis; L-valine from pyruvate: step 3/4. In terms of biological role, functions in the biosynthesis of branched-chain amino acids. Catalyzes the dehydration of (2R,3R)-2,3-dihydroxy-3-methylpentanoate (2,3-dihydroxy-3-methylvalerate) into 2-oxo-3-methylpentanoate (2-oxo-3-methylvalerate) and of (2R)-2,3-dihydroxy-3-methylbutanoate (2,3-dihydroxyisovalerate) into 2-oxo-3-methylbutanoate (2-oxoisovalerate), the penultimate precursor to L-isoleucine and L-valine, respectively. This Pasteurella multocida (strain Pm70) protein is Dihydroxy-acid dehydratase.